The following is a 479-amino-acid chain: Anaerobic nitric oxide reductase flavorubredoxin (479 aa).

Residues 30-210 (LRGSSYNSYL…PFSRLVTPKI (181 aa)) are zinc metallo-hydrolase. Residues His79, Glu81, Asp83, His147, Asp166, and His227 each contribute to the Fe cation site. The 140-residue stretch at 254-393 (ITIFYDTMSN…LCRQHGRDIA (140 aa)) folds into the Flavodoxin-like domain. FMN is bound by residues 260 to 264 (TMSNN) and 342 to 369 (AFGS…EMSL). One can recognise a Rubredoxin-like domain in the interval 423 to 474 (GPKMQCSVCQWIYDPALGEPLQDVAPGTPWSEVPDNFLCPECSLGKDVFDVL). Positions 428, 431, 461, and 464 each coordinate Fe cation.

In the N-terminal section; belongs to the zinc metallo-hydrolase group 3 family. Homotetramer. It depends on Fe cation as a cofactor. Requires FMN as cofactor.

It is found in the cytoplasm. The protein operates within nitrogen metabolism; nitric oxide reduction. In terms of biological role, anaerobic nitric oxide reductase; uses NADH to detoxify nitric oxide (NO), protecting several 4Fe-4S NO-sensitive enzymes. Has at least 2 reductase partners, only one of which (NorW, flavorubredoxin reductase) has been identified. NO probably binds to the di-iron center; electrons enter from the NorW at rubredoxin and are transferred sequentially to the FMN center and the di-iron center. Also able to function as an aerobic oxygen reductase. The sequence is that of Anaerobic nitric oxide reductase flavorubredoxin from Salmonella paratyphi A (strain ATCC 9150 / SARB42).